A 144-amino-acid polypeptide reads, in one-letter code: Large ribosomal subunit protein uL13 (144 aa).

Belongs to the universal ribosomal protein uL13 family. Part of the 50S ribosomal subunit.

This protein is one of the early assembly proteins of the 50S ribosomal subunit, although it is not seen to bind rRNA by itself. It is important during the early stages of 50S assembly. The sequence is that of Large ribosomal subunit protein uL13 from Clostridium tetani (strain Massachusetts / E88).